The chain runs to 319 residues: Beta-ketoacyl-[acyl-carrier-protein] synthase III (319 aa).

Active-site residues include Cys113 and His246. The ACP-binding stretch occupies residues 247 to 251; sequence QANIR. Asn276 is an active-site residue.

This sequence belongs to the thiolase-like superfamily. FabH family. In terms of assembly, homodimer.

It localises to the cytoplasm. It carries out the reaction malonyl-[ACP] + acetyl-CoA + H(+) = 3-oxobutanoyl-[ACP] + CO2 + CoA. It participates in lipid metabolism; fatty acid biosynthesis. Functionally, catalyzes the condensation reaction of fatty acid synthesis by the addition to an acyl acceptor of two carbons from malonyl-ACP. Catalyzes the first condensation reaction which initiates fatty acid synthesis and may therefore play a role in governing the total rate of fatty acid production. Possesses both acetoacetyl-ACP synthase and acetyl transacylase activities. Its substrate specificity determines the biosynthesis of branched-chain and/or straight-chain of fatty acids. The chain is Beta-ketoacyl-[acyl-carrier-protein] synthase III from Ehrlichia canis (strain Jake).